Here is a 118-residue protein sequence, read N- to C-terminus: Ribosome-binding factor A (118 aa).

The protein belongs to the RbfA family. In terms of assembly, monomer. Binds 30S ribosomal subunits, but not 50S ribosomal subunits or 70S ribosomes.

It is found in the cytoplasm. In terms of biological role, one of several proteins that assist in the late maturation steps of the functional core of the 30S ribosomal subunit. Associates with free 30S ribosomal subunits (but not with 30S subunits that are part of 70S ribosomes or polysomes). Required for efficient processing of 16S rRNA. May interact with the 5'-terminal helix region of 16S rRNA. The chain is Ribosome-binding factor A from Bacillus anthracis (strain A0248).